A 443-amino-acid polypeptide reads, in one-letter code: Protein Z-dependent protease inhibitor (443 aa).

The signal sequence occupies residues 1–23; it reads MKVVPSLLLSVLLAQVWLVPGLA. The tract at residues 24–66 is disordered; that stretch reads PSPQSPETPAPQNQTSRVVQAPREEEEDEQEASEEKAGDEEKA. An N-linked (GlcNAc...) asparagine glycan is attached at Asn36. Ser56 carries the post-translational modification Phosphoserine. Basic and acidic residues predominate over residues 56 to 66; that stretch reads SEEKAGDEEKA. The segment at 136–153 is heparin-binding; the sequence is TKPGLLPSLFKGLRETLS. N-linked (GlcNAc...) asparagine glycosylation is found at Asn180 and Asn295.

Belongs to the serpin family. Post-translationally, phosphorylated by FAM20C in the extracellular medium.

Its subcellular location is the secreted. Functionally, inhibits activity of the coagulation protease factor Xa in the presence of PROZ, calcium and phospholipids. Also inhibits factor XIa in the absence of cofactors. In Pongo abelii (Sumatran orangutan), this protein is Protein Z-dependent protease inhibitor (SERPINA10).